Reading from the N-terminus, the 944-residue chain is Translation initiation factor IF-2 (944 aa).

Disordered regions lie at residues 61-157 (IQAN…KAKQ) and 173-281 (TQSN…SHKI). The segment covering 132-150 (TFENQTPPTENTPKVVSHS) has biased composition (polar residues). Residues 175–185 (SNANNASNANN) are compositionally biased toward low complexity. A compositionally biased stretch (basic and acidic residues) spans 186–203 (AKKEISEVKKQEQEIKRH). The span at 204–215 (ENIKRRTGFRVI) shows a compositional bias: basic residues. Residues 244–259 (EDIKKEWQEKDKQEAK) show a composition bias toward basic and acidic residues. Residues 443–612 (ERPPVVTIMG…LIQAGIMELK (170 aa)) form the tr-type G domain. The G1 stretch occupies residues 452–459 (GHVDHGKT). A GTP-binding site is contributed by 452-459 (GHVDHGKT). The tract at residues 477-481 (GITQH) is G2. The G3 stretch occupies residues 498-501 (DTPG). GTP contacts are provided by residues 498–502 (DTPGH) and 552–555 (NKMD). The G4 stretch occupies residues 552–555 (NKMD). The interval 588-590 (SAK) is G5.

Belongs to the TRAFAC class translation factor GTPase superfamily. Classic translation factor GTPase family. IF-2 subfamily.

The protein localises to the cytoplasm. One of the essential components for the initiation of protein synthesis. Protects formylmethionyl-tRNA from spontaneous hydrolysis and promotes its binding to the 30S ribosomal subunits. Also involved in the hydrolysis of GTP during the formation of the 70S ribosomal complex. The polypeptide is Translation initiation factor IF-2 (infB) (Helicobacter pylori (strain ATCC 700392 / 26695) (Campylobacter pylori)).